The primary structure comprises 875 residues: Serine/threonine-protein kinase D2 (875 aa).

A disordered region spans residues 1 to 33 (MAAAPSHPAGLPCSPGPGSPPPPGGSDLQSLPP). Over residues 14 to 24 (SPGPGSPPPPG) the composition is skewed to pro residues. Residues Ser26 and Ser30 each carry the phosphoserine modification. Tyr87 is subject to Phosphotyrosine. A Phorbol-ester/DAG-type 1 zinc finger spans residues 138–188 (PHALTVHSYRAPAFCDHCGEMLFGLVRQGLKCDGCGLNYHKRCAFSIPNNC). Phosphoserine occurs at positions 197, 198, 200, 203, 206, 211, 212, and 214. A disordered region spans residues 224-247 (RSTTDLLPRRPPSSSSSSSSSSFY). Positions 236–245 (SSSSSSSSSS) are enriched in low complexity. Phosphoserine; by CSNK1D and CSNK1E is present on Ser244. Position 245 is a phosphoserine (Ser245). Residues 265–315 (PHTFLIHSYTRPTVCQACKKLLKGLFRQGLQCKDCKFNCHKRCATRVPNDC) form a Phorbol-ester/DAG-type 2 zinc finger. The 113-residue stretch at 398 to 510 (TTLREGWVVH…WETAIRQALM (113 aa)) folds into the PH domain. Tyr408 carries the phosphotyrosine modification. Residue Tyr439 is modified to Phosphotyrosine; by ABL1. A Phosphoserine modification is found at Ser519. One can recognise a Protein kinase domain in the interval 552-808 (IFPDEVLGSG…VDKSLSHPWL (257 aa)). ATP-binding positions include 558-566 (LGSGQFGVV) and Lys581. Asp675 functions as the Proton acceptor in the catalytic mechanism. Position 707 is a phosphoserine; by PKC (Ser707). Ser711 carries the post-translational modification Phosphoserine. Tyr718 bears the Phosphotyrosine; by ABL1 mark. The Important for ABL1-mediated Tyr-718 phosphorylation signature appears at 725–727 (LNQ). Position 873 is a phosphoserine; by autocatalysis (Ser873).

Belongs to the protein kinase superfamily. CAMK Ser/Thr protein kinase family. PKD subfamily. As to quaternary structure, interacts (via C-terminus) with LCK. Interacts (via N-terminus and zing-finger domain 1 and 2) with PRKCD in response to oxidative stress; the interaction is independent of PRKD2 tyrosine phosphorylation. Mg(2+) is required as a cofactor. Post-translationally, phosphorylation of Ser-873 correlates with the activation status of the kinase. Ser-707 is probably phosphorylated by PKC. Phosphorylation at Ser-244 by CSNK1D and CSNK1E promotes nuclear localization and substrate targeting. Phosphorylation at Ser-244, Ser-707 and Ser-711 is required for nuclear localization. Phosphorylated at Tyr-438 by ABL1 in response to oxidative stress. Phosphorylated at Tyr-718 by ABL1 specifically in response to oxidative stress; requires prior phosphorylation at Ser-707 or/and Ser-711.

The protein resides in the cytoplasm. Its subcellular location is the cell membrane. The protein localises to the golgi apparatus. It localises to the trans-Golgi network. It carries out the reaction L-seryl-[protein] + ATP = O-phospho-L-seryl-[protein] + ADP + H(+). The catalysed reaction is L-threonyl-[protein] + ATP = O-phospho-L-threonyl-[protein] + ADP + H(+). Its activity is regulated as follows. Activated by DAG and phorbol esters. Phorbol-ester/DAG-type domains bind DAG, mediating translocation to membranes. Autophosphorylation of Ser-711 and phosphorylation of Ser-707 by PKC relieves auto-inhibition by the PH domain. Catalytic activity is further increased by phosphorylation at Tyr-718 in response to oxidative stress. In terms of biological role, serine/threonine-protein kinase that converts transient diacylglycerol (DAG) signals into prolonged physiological effects downstream of PKC, and is involved in the regulation of cell proliferation via MAPK1/3 (ERK1/2) signaling, oxidative stress-induced NF-kappa-B activation, inhibition of HDAC7 transcriptional repression, signaling downstream of T-cell antigen receptor (TCR) and cytokine production, and plays a role in Golgi membrane trafficking, angiogenesis, secretory granule release and cell adhesion. May potentiate mitogenesis induced by the neuropeptide bombesin by mediating an increase in the duration of MAPK1/3 (ERK1/2) signaling, which leads to accumulation of immediate-early gene products including FOS that stimulate cell cycle progression. In response to oxidative stress, is phosphorylated at Tyr-438 and Tyr-718 by ABL1, which leads to the activation of PRKD2 without increasing its catalytic activity, and mediates activation of NF-kappa-B. In response to the activation of the gastrin receptor CCKBR, is phosphorylated at Ser-244 by CSNK1D and CSNK1E, translocates to the nucleus, phosphorylates HDAC7, leading to nuclear export of HDAC7 and inhibition of HDAC7 transcriptional repression of NR4A1/NUR77. Upon TCR stimulation, is activated independently of ZAP70, translocates from the cytoplasm to the nucleus and is required for interleukin-2 (IL2) promoter up-regulation. During adaptive immune responses, is required in peripheral T-lymphocytes for the production of the effector cytokines IL2 and IFNG after TCR engagement and for optimal induction of antibody responses to antigens. In epithelial cells stimulated with lysophosphatidic acid (LPA), is activated through a PKC-dependent pathway and mediates LPA-stimulated interleukin-8 (IL8) secretion via a NF-kappa-B-dependent pathway. During TCR-induced T-cell activation, interacts with and is activated by the tyrosine kinase LCK, which results in the activation of the NFAT transcription factors. In the trans-Golgi network (TGN), regulates the fission of transport vesicles that are on their way to the plasma membrane and in polarized cells is involved in the transport of proteins from the TGN to the basolateral membrane. Plays an important role in endothelial cell proliferation and migration prior to angiogenesis, partly through modulation of the expression of KDR/VEGFR2 and FGFR1, two key growth factor receptors involved in angiogenesis. In secretory pathway, is required for the release of chromogranin-A (CHGA)-containing secretory granules from the TGN. Downstream of PRKCA, plays important roles in angiotensin-2-induced monocyte adhesion to endothelial cells. In Rattus norvegicus (Rat), this protein is Serine/threonine-protein kinase D2 (Prkd2).